The following is a 145-amino-acid chain: Large ribosomal subunit protein uL11 (145 aa).

It belongs to the universal ribosomal protein uL11 family. As to quaternary structure, part of the ribosomal stalk of the 50S ribosomal subunit. Interacts with L10 and the large rRNA to form the base of the stalk. L10 forms an elongated spine to which L12 dimers bind in a sequential fashion forming a multimeric L10(L12)X complex. One or more lysine residues are methylated.

Functionally, forms part of the ribosomal stalk which helps the ribosome interact with GTP-bound translation factors. This chain is Large ribosomal subunit protein uL11, found in Coxiella burnetii (strain CbuK_Q154) (Coxiella burnetii (strain Q154)).